Here is a 593-residue protein sequence, read N- to C-terminus: Bifunctional purine biosynthesis protein ATIC (593 aa).

The MGS-like domain maps to 1–147; that stretch reads MAARQQLALL…KNHARVTVVC (147 aa). The IMP cyclohydrolase stretch occupies residues 1–199; that stretch reads MAARQQLALL…ISDYFRKEYS (199 aa). Residues 13–15, 35–38, 65–68, 102–103, and 126–127 each bind IMP; these read SEK, SGGT, RVKT, CN, and DI. The active-site Proton donor/acceptor; for FAICAR cyclization activity is K138. K200 is modified (N6-acetyllysine). Positions 200-593 are AICAR formyltransferase; it reads KGVSQLPLRY…IHTNLRLFHH (394 aa). Residues 208–209, H268, G317, D340, N432, and R452 contribute to the 5-amino-1-(5-phospho-beta-D-ribosyl)imidazole-4-carboxamide site; that span reads RY. H268 acts as the Proton acceptor; for AICAR formyltransferase activity in catalysis. (6R)-10-formyltetrahydrofolate is bound at residue I453. 5-amino-1-(5-phospho-beta-D-ribosyl)imidazole-4-carboxamide is bound at residue F542. (6R)-10-formyltetrahydrofolate contacts are provided by residues D547 and 566-567; that span reads SA. R589 lines the 5-amino-1-(5-phospho-beta-D-ribosyl)imidazole-4-carboxamide pocket.

Belongs to the PurH family. Homodimer. Associates with internalized INSR complexes on Golgi/endosomal membranes. Interacts with INSR; ATIC together with PRKAA2/AMPK2 and HACD3/PTPLAD1 is proposed to be part of a signaling network regulating INSR autophosphorylation and endocytosis.

The protein resides in the cytoplasm. The protein localises to the cytosol. It catalyses the reaction (6R)-10-formyltetrahydrofolate + 5-amino-1-(5-phospho-beta-D-ribosyl)imidazole-4-carboxamide = 5-formamido-1-(5-phospho-D-ribosyl)imidazole-4-carboxamide + (6S)-5,6,7,8-tetrahydrofolate. The catalysed reaction is 10-formyldihydrofolate + 5-amino-1-(5-phospho-beta-D-ribosyl)imidazole-4-carboxamide = 5-formamido-1-(5-phospho-D-ribosyl)imidazole-4-carboxamide + 7,8-dihydrofolate. It carries out the reaction IMP + H2O = 5-formamido-1-(5-phospho-D-ribosyl)imidazole-4-carboxamide. It participates in purine metabolism; IMP biosynthesis via de novo pathway; 5-formamido-1-(5-phospho-D-ribosyl)imidazole-4-carboxamide from 5-amino-1-(5-phospho-D-ribosyl)imidazole-4-carboxamide (10-formyl THF route): step 1/1. It functions in the pathway purine metabolism; IMP biosynthesis via de novo pathway; IMP from 5-formamido-1-(5-phospho-D-ribosyl)imidazole-4-carboxamide: step 1/1. AMP and XMP inhibit AICAR formyltransferase activity. AICAR formyltransferase activity is competitively inhibited by 2-[5-hydroxy-3-methyl-1-(2-methyl-4-sulfo-phenyl)-1H-pyrazol-4-ylazo]-4-sulfo-benzoic acid (326203-A). FAICAR cyclization is competitively inhibited by 1,5-dihydroimidazo[4,5-c][1,2,6]thiadiazin-4(3H)-one-2,2-dioxide and the corresponding nucleoside and nucleoside monophosphate. Functionally, bifunctional enzyme that catalyzes the last two steps of purine biosynthesis. Acts as a transformylase that incorporates a formyl group to the AMP analog AICAR (5-amino-1-(5-phospho-beta-D-ribosyl)imidazole-4-carboxamide) to produce the intermediate formyl-AICAR (FAICAR). Can use both 10-formyldihydrofolate and 10-formyltetrahydrofolate as the formyl donor in this reaction. Also catalyzes the cyclization of FAICAR to inosine monophosphate (IMP). Promotes insulin receptor/INSR autophosphorylation and is involved in INSR internalization. In Gallus gallus (Chicken), this protein is Bifunctional purine biosynthesis protein ATIC (ATIC).